A 99-amino-acid polypeptide reads, in one-letter code: MTEETITIDSISNGILNNLLTTLIQDIVARETTQQQLLKTRYPDLRSYYFYPNGSLDINGLQKQQESSQYIHCENCGRDVSANRLAAHLQRCLSRGARR.

Residues 71 to 92 form an SGF11-type zinc finger; it reads IHCENCGRDVSANRLAAHLQRC.

This sequence belongs to the SGF11 family. As to quaternary structure, component of the 1.8 MDa SAGA transcription coactivator-HAT complex. SAGA is built of 5 distinct domains with specialized functions. Within the SAGA complex, SUS1, SGF11, SGF73 and UBP8 form an additional subcomplex of SAGA called the DUB module (deubiquitination module). Interacts directly with SGF73, SUS1 and UBP8.

It localises to the nucleus. Functions as a component of the transcription regulatory histone acetylation (HAT) complex SAGA. At the promoters, SAGA is required for recruitment of the basal transcription machinery. It influences RNA polymerase II transcriptional activity through different activities such as TBP interaction and promoter selectivity, interaction with transcription activators, and chromatin modification through histone acetylation and deubiquitination. SAGA acetylates nucleosomal histone H3 to some extent (to form H3K9ac, H3K14ac, H3K18ac and H3K23ac). SAGA interacts with DNA via upstream activating sequences (UASs). Involved in transcriptional regulation of a subset of SAGA-regulated genes. Within the SAGA complex, participates in a subcomplex, that specifically deubiquitinates histones H2B. The protein is SAGA-associated factor 11 of Saccharomyces cerevisiae (strain RM11-1a) (Baker's yeast).